Consider the following 316-residue polypeptide: Probable protein-L-isoaspartate O-methyltransferase (316 aa).

Residues 103–106 (ATIS), His-111, Ser-136, 157–158 (EH), 187–188 (DG), Thr-263, and Gln-268 contribute to the S-adenosyl-L-homocysteine site. Ser-106 is an active-site residue.

It belongs to the methyltransferase superfamily. L-isoaspartyl/D-aspartyl protein methyltransferase family.

The protein localises to the cytoplasm. The protein resides in the cytosol. It carries out the reaction [protein]-L-isoaspartate + S-adenosyl-L-methionine = [protein]-L-isoaspartate alpha-methyl ester + S-adenosyl-L-homocysteine. In terms of biological role, initiates the repair of damaged proteins by catalyzing methyl esterification of L-isoaspartyl and D-aspartyl residues produced by spontaneous isomerization and racemization of L-aspartyl and L-asparaginyl residues in aging peptides and proteins. The polypeptide is Probable protein-L-isoaspartate O-methyltransferase (pcmA) (Dictyostelium discoideum (Social amoeba)).